The following is a 154-amino-acid chain: Ribonuclease H (154 aa).

The region spanning 1–142 (MTKHVEIFTD…CDELARTAAE (142 aa)) is the RNase H type-1 domain. Positions 10, 48, 70, and 134 each coordinate Mg(2+).

This sequence belongs to the RNase H family. Monomer. Requires Mg(2+) as cofactor.

Its subcellular location is the cytoplasm. It catalyses the reaction Endonucleolytic cleavage to 5'-phosphomonoester.. Functionally, endonuclease that specifically degrades the RNA of RNA-DNA hybrids. This chain is Ribonuclease H, found in Vibrio campbellii (strain ATCC BAA-1116).